A 161-amino-acid polypeptide reads, in one-letter code: Allophycocyanin alpha chain (161 aa).

Asparagine 71 is subject to N4-methylasparagine. Cysteine 81 provides a ligand contact to (2R,3E)-phycocyanobilin.

Belongs to the phycobiliprotein family. As to quaternary structure, heterodimer of an alpha and a beta chain. Post-translationally, contains one covalently linked phycocyanobilin chromophore.

It is found in the cellular thylakoid membrane. Its function is as follows. Light-harvesting photosynthetic bile pigment-protein from the phycobiliprotein complex. Allophycocyanin has a maximum absorption at approximately 650 nanometers. This chain is Allophycocyanin alpha chain (apcA), found in Thermosynechococcus vestitus (strain NIES-2133 / IAM M-273 / BP-1).